The sequence spans 313 residues: Porphobilinogen deaminase (313 aa).

Cys-242 carries the S-(dipyrrolylmethanemethyl)cysteine modification.

It belongs to the HMBS family. As to quaternary structure, monomer. Dipyrromethane serves as cofactor.

It carries out the reaction 4 porphobilinogen + H2O = hydroxymethylbilane + 4 NH4(+). The protein operates within porphyrin-containing compound metabolism; protoporphyrin-IX biosynthesis; coproporphyrinogen-III from 5-aminolevulinate: step 2/4. Its function is as follows. Tetrapolymerization of the monopyrrole PBG into the hydroxymethylbilane pre-uroporphyrinogen in several discrete steps. The chain is Porphobilinogen deaminase from Shigella flexneri.